A 277-amino-acid polypeptide reads, in one-letter code: ATP synthase subunit delta (277 aa).

This sequence belongs to the ATPase delta chain family. As to quaternary structure, F-type ATPases have 2 components, F(1) - the catalytic core - and F(0) - the membrane proton channel. F(1) has five subunits: alpha(3), beta(3), gamma(1), delta(1), epsilon(1). F(0) has three main subunits: a(1), b(2) and c(10-14). The alpha and beta chains form an alternating ring which encloses part of the gamma chain. F(1) is attached to F(0) by a central stalk formed by the gamma and epsilon chains, while a peripheral stalk is formed by the delta and b chains.

The protein resides in the cell membrane. F(1)F(0) ATP synthase produces ATP from ADP in the presence of a proton or sodium gradient. F-type ATPases consist of two structural domains, F(1) containing the extramembraneous catalytic core and F(0) containing the membrane proton channel, linked together by a central stalk and a peripheral stalk. During catalysis, ATP synthesis in the catalytic domain of F(1) is coupled via a rotary mechanism of the central stalk subunits to proton translocation. Its function is as follows. This protein is part of the stalk that links CF(0) to CF(1). It either transmits conformational changes from CF(0) to CF(1) or is implicated in proton conduction. This Frankia alni (strain DSM 45986 / CECT 9034 / ACN14a) protein is ATP synthase subunit delta.